Consider the following 71-residue polypeptide: DNA-directed RNA polymerase subunit epsilon (71 aa).

This sequence belongs to the RNA polymerase subunit epsilon family. As to quaternary structure, RNAP is composed of a core of 2 alpha, a beta and a beta' subunit. The core is associated with a delta subunit, and at least one of epsilon or omega. When a sigma factor is associated with the core the holoenzyme is formed, which can initiate transcription.

It carries out the reaction RNA(n) + a ribonucleoside 5'-triphosphate = RNA(n+1) + diphosphate. Functionally, a non-essential component of RNA polymerase (RNAP). This is DNA-directed RNA polymerase subunit epsilon from Staphylococcus saprophyticus subsp. saprophyticus (strain ATCC 15305 / DSM 20229 / NCIMB 8711 / NCTC 7292 / S-41).